Reading from the N-terminus, the 285-residue chain is Bifunctional protein FolD 2 (285 aa).

NADP(+) contacts are provided by residues 164–166 (GRS), serine 189, and valine 230.

This sequence belongs to the tetrahydrofolate dehydrogenase/cyclohydrolase family. As to quaternary structure, homodimer.

It catalyses the reaction (6R)-5,10-methylene-5,6,7,8-tetrahydrofolate + NADP(+) = (6R)-5,10-methenyltetrahydrofolate + NADPH. The enzyme catalyses (6R)-5,10-methenyltetrahydrofolate + H2O = (6R)-10-formyltetrahydrofolate + H(+). It functions in the pathway one-carbon metabolism; tetrahydrofolate interconversion. Functionally, catalyzes the oxidation of 5,10-methylenetetrahydrofolate to 5,10-methenyltetrahydrofolate and then the hydrolysis of 5,10-methenyltetrahydrofolate to 10-formyltetrahydrofolate. The chain is Bifunctional protein FolD 2 from Geobacter metallireducens (strain ATCC 53774 / DSM 7210 / GS-15).